A 1345-amino-acid chain; its full sequence is Membrane-anchored lipid-binding protein LAM4 (1345 aa).

Residues 1-1197 are Cytoplasmic-facing; the sequence is MTRDSKKKHH…NFSSEIFMNK (1197 aa). Disordered stretches follow at residues 51–80, 115–134, 139–164, 190–302, 356–397, 425–447, and 489–531; these read RVGG…KAAA, SLKG…PSLS, EKEK…DGHD, DADN…SLDD, LPEA…KPRR, SFNS…PREM, and STII…NGRQ. T66 carries the post-translational modification Phosphothreonine. Low complexity predominate over residues 216 to 228; that stretch reads SENSTNNKNTSST. Residues 246 to 271 are compositionally biased toward polar residues; sequence SKSSTPSNQQLNTTEAGSKSKPSSLS. The segment covering 283-294 has biased composition (low complexity); it reads HSNSHSSSNAIS. The segment covering 425-436 has biased composition (polar residues); the sequence is SFNSSNGLTNND. Residues 498–516 are compositionally biased toward low complexity; it reads SNGRPSSGLRRSSSKSFSS. In terms of domain architecture, GRAM spans 549–616; the sequence is EFHAIFKDSG…FKTIVQIEKR (68 aa). Residues 665–677 are compositionally biased toward low complexity; sequence SNSNNTNSSSNSI. The tract at residues 665–722 is disordered; sequence SNSNNTNSSSNSISDDENDDYDDDYDDYGDDDDDLYDNSNNISDSTDMTSSVSIGKPE. The segment covering 678-700 has biased composition (acidic residues); sequence SDDENDDYDDDYDDYGDDDDDLY. A Phosphoserine modification is found at S747. 2 consecutive VASt domains span residues 758–930 and 967–1139; these read NEKL…TRSA and DDSI…SRAK. The segment at 930-963 is disordered; it reads ATKRKRSSKENTVTVSTLPKMEPSSHAPTEPDIQ. A compositionally biased stretch (basic residues) spans 1141–1158; the sequence is KKPVKKVMKSHDKHRPFH. The interval 1141–1172 is disordered; that stretch reads KKPVKKVMKSHDKHRPFHSKVEQKSSESRKSD. A compositionally biased stretch (basic and acidic residues) spans 1159–1172; that stretch reads SKVEQKSSESRKSD. Residues 1198–1218 traverse the membrane as a helical segment; that stretch reads LLSPQKLFLILGLTIMLFWSP. Over 1219-1345 the chain is Lumenal; the sequence is RLHVFQEKNN…NIERDANDLS (127 aa).

It belongs to the YSP2 family.

The protein localises to the endoplasmic reticulum membrane. Functionally, may be involved in sterol transfer between intracellular membranes. In Saccharomyces cerevisiae (strain ATCC 204508 / S288c) (Baker's yeast), this protein is Membrane-anchored lipid-binding protein LAM4.